Here is a 272-residue protein sequence, read N- to C-terminus: Cytochrome b-c1 complex subunit Rieske-1, mitochondrial (272 aa).

A mitochondrion-targeting transit peptide spans 1–60; that stretch reads MLRVAGRRLFSVSQRSSTATSFVVSRDHTLSDGGGDSSSAPRSLPSADLSSYHRSLIRGF. A disordered region spans residues 27–46; it reads DHTLSDGGGDSSSAPRSLPS. At 61 to 109 the chain is on the mitochondrial matrix side; sequence SSQVLAQGNEIGFGSEVPATVEAVKTPNSKIVYDDHNHERYPPGDPSKR. A helical membrane pass occupies residues 110-132; sequence AFAYFVLSGGRFVYASVLRLLVL. The Mitochondrial intermembrane portion of the chain corresponds to 133–272; sequence KLIVSMSASK…FLEENKLLIG (140 aa). The Rieske domain maps to 201 to 270; it reads VRVKNPEWLV…YSFLEENKLL (70 aa). [2Fe-2S] cluster-binding residues include Cys215, His217, Cys234, and His237. A disulfide bridge links Cys220 with Cys236.

This sequence belongs to the Rieske iron-sulfur protein family. Component of the ubiquinol-cytochrome c oxidoreductase (cytochrome b-c1 complex, complex III, CIII), a multisubunit enzyme composed of 10 subunits. The complex is composed of 3 respiratory subunits cytochrome b (MT-CYB), cytochrome c1 (CYC1-1 or CYC1-2) and Rieske protein (UCR1-1 or UCR1-2), 2 core protein subunits MPPalpha1 (or MPPalpha2) and MPPB, and 5 low-molecular weight protein subunits QCR7-1 (or QCR7-2), UCRQ-1 (or UCRQ-2), QCR9, UCRY and probably QCR6-1 (or QCR6-2). The complex exists as an obligatory dimer and forms supercomplexes (SCs) in the inner mitochondrial membrane with NADH-ubiquinone oxidoreductase (complex I, CI), resulting in different assemblies (supercomplexes SCI(1)III(2) and SCI(2)III(4)). [2Fe-2S] cluster serves as cofactor.

The protein resides in the mitochondrion inner membrane. It catalyses the reaction a quinol + 2 Fe(III)-[cytochrome c](out) = a quinone + 2 Fe(II)-[cytochrome c](out) + 2 H(+)(out). Component of the ubiquinol-cytochrome c oxidoreductase, a multisubunit transmembrane complex that is part of the mitochondrial electron transport chain which drives oxidative phosphorylation. The respiratory chain contains 3 multisubunit complexes succinate dehydrogenase (complex II, CII), ubiquinol-cytochrome c oxidoreductase (cytochrome b-c1 complex, complex III, CIII) and cytochrome c oxidase (complex IV, CIV), that cooperate to transfer electrons derived from NADH and succinate to molecular oxygen, creating an electrochemical gradient over the inner membrane that drives transmembrane transport and the ATP synthase. The cytochrome b-c1 complex catalyzes electron transfer from ubiquinol to cytochrome c, linking this redox reaction to translocation of protons across the mitochondrial inner membrane, with protons being carried across the membrane as hydrogens on the quinol. In the process called Q cycle, 2 protons are consumed from the matrix, 4 protons are released into the intermembrane space and 2 electrons are passed to cytochrome c. The Rieske protein is a catalytic core subunit containing a [2Fe-2S] iron-sulfur cluster. It cycles between 2 conformational states during catalysis to transfer electrons from the quinol bound in the Q(0) site in cytochrome b to cytochrome c1. This Arabidopsis thaliana (Mouse-ear cress) protein is Cytochrome b-c1 complex subunit Rieske-1, mitochondrial.